The chain runs to 77 residues: SS18-like protein 2 (77 aa).

The SH2-binding motif lies at 50–53; sequence YQHV.

Belongs to the SS18 family.

The sequence is that of SS18-like protein 2 (Ss18l2) from Mus musculus (Mouse).